Consider the following 436-residue polypeptide: Voltage-gated purine nucleotide uniporter SLC17A9 (436 aa).

10 helical membrane-spanning segments follow: residues 64 to 84 (IVLS…GHLG), 92 to 112 (VILL…LLAH), 118 to 138 (LAFM…YFPA), 158 to 178 (IVGA…SLLL), 181 to 201 (YGWQ…VWYV), 239 to 259 (PAVW…FILL), 276 to 296 (WIFN…SGFL), 316 to 336 (GMGL…SSFC), 369 to 389 (GFLF…GVCL), and 402 to 422 (CLFN…LVFG).

It belongs to the major facilitator superfamily. Sodium/anion cotransporter family. As to expression, widely expressed, but more predominantly in adrenal gland, brain and thyroid.

The protein localises to the cytoplasmic vesicle. The protein resides in the secretory vesicle. Its subcellular location is the chromaffin granule membrane. It localises to the secretory vesicle membrane. It is found in the lysosome membrane. It carries out the reaction ATP(in) = ATP(out). The enzyme catalyses ADP(in) = ADP(out). It catalyses the reaction GTP(in) = GTP(out). With respect to regulation, activity is chloride-dependent. Inhibited by AMP-PNP, gammaS-ATP, diadenosine triphosphate, 4,4'- diisothiocyanatostilbene-2,2'-disulfonate (DIDS) and Evans blue. Functionally, voltage-gated ATP nucleotide uniporter that can also transport the purine nucleotides ADP and GTP. Uses the membrane potential as the driving force to control ATP accumulation in lysosomes and secretory vesicles. By controlling ATP storage in lysosomes, regulates ATP-dependent proteins of these organelles. Also indirectly regulates the exocytosis of ATP through its import into lysosomes in astrocytes and secretory vesicles such as adrenal chromaffin granules, mucin granules and synaptic vesicles. This is Voltage-gated purine nucleotide uniporter SLC17A9 from Homo sapiens (Human).